The sequence spans 159 residues: Ribosome-binding factor A (159 aa).

Composition is skewed to basic and acidic residues over residues 118–128 (AADDEVAKARE) and 137–146 (DPYKEPRVAS). A disordered region spans residues 118-159 (AADDEVAKARENAQPAGDADPYKEPRVASDEDEASPDVREAD).

Belongs to the RbfA family. Monomer. Binds 30S ribosomal subunits, but not 50S ribosomal subunits or 70S ribosomes.

It is found in the cytoplasm. One of several proteins that assist in the late maturation steps of the functional core of the 30S ribosomal subunit. Associates with free 30S ribosomal subunits (but not with 30S subunits that are part of 70S ribosomes or polysomes). Required for efficient processing of 16S rRNA. May interact with the 5'-terminal helix region of 16S rRNA. This is Ribosome-binding factor A from Rhodococcus erythropolis (strain PR4 / NBRC 100887).